The primary structure comprises 428 residues: Putative heme-binding peroxidase (428 aa).

The segment at Met1 to Lys33 is disordered. The span at Pro21–Ile32 shows a compositional bias: polar residues. Catalysis depends on His188, which acts as the Proton acceptor. Residue His312 coordinates heme b. Residue Trp328 is the Tryptophan radical intermediate of the active site.

Belongs to the peroxidase family. Cytochrome c peroxidase subfamily. Heme b serves as cofactor.

In terms of biological role, destroys radicals which are normally produced within the cells and which are toxic to biological systems. This chain is Putative heme-binding peroxidase, found in Debaryomyces hansenii (strain ATCC 36239 / CBS 767 / BCRC 21394 / JCM 1990 / NBRC 0083 / IGC 2968) (Yeast).